The chain runs to 406 residues: Flavohemoprotein (406 aa).

The Globin domain occupies 6–144 (VLLDKKTTEI…IADIFISVEK (139 aa)). Residue His91 participates in heme b binding. Residues Tyr101 and Glu143 each act as charge relay system in the active site. The tract at residues 155-406 (GGWTGFRDFK…LFGPLEPIAK (252 aa)) is reductase. Positions 158–267 (TGFRDFKVIK…SAPAGDFILD (110 aa)) constitute an FAD-binding FR-type domain. FAD is bound by residues Tyr196 and 212 to 215 (RQYS). Position 280–285 (280–285 (GVGLTP)) interacts with NADP(+). 397–400 (LFGP) serves as a coordination point for FAD.

This sequence belongs to the globin family. Two-domain flavohemoproteins subfamily. It in the C-terminal section; belongs to the flavoprotein pyridine nucleotide cytochrome reductase family. Heme b serves as cofactor. It depends on FAD as a cofactor.

It carries out the reaction 2 nitric oxide + NADPH + 2 O2 = 2 nitrate + NADP(+) + H(+). The enzyme catalyses 2 nitric oxide + NADH + 2 O2 = 2 nitrate + NAD(+) + H(+). In terms of biological role, is involved in NO detoxification in an aerobic process, termed nitric oxide dioxygenase (NOD) reaction that utilizes O(2) and NAD(P)H to convert NO to nitrate, which protects the bacterium from various noxious nitrogen compounds. Therefore, plays a central role in the inducible response to nitrosative stress. The chain is Flavohemoprotein from Oceanobacillus iheyensis (strain DSM 14371 / CIP 107618 / JCM 11309 / KCTC 3954 / HTE831).